Here is a 403-residue protein sequence, read N- to C-terminus: D-galactonate dehydratase family member Mmwyl1_0037 (403 aa).

Substrate-binding residues include Asn-37 and His-122. Catalysis depends on Tyr-159, which acts as the Proton donor/acceptor. Asp-211 contacts Mg(2+). The Proton donor/acceptor role is filled by His-213. Residues Glu-237 and Glu-263 each contribute to the Mg(2+) site. Substrate is bound by residues Glu-263, Arg-284, His-313, Asp-317, and Glu-340.

This sequence belongs to the mandelate racemase/muconate lactonizing enzyme family. GalD subfamily. The cofactor is Mg(2+).

It carries out the reaction D-mannonate = 2-dehydro-3-deoxy-D-gluconate + H2O. Its function is as follows. Has low D-mannonate dehydratase activity (in vitro), suggesting that this is not a physiological substrate and that it has no significant role in D-mannonate degradation in vivo. Has no detectable activity with a panel of 70 other acid sugars (in vitro). In Marinomonas sp. (strain MWYL1), this protein is D-galactonate dehydratase family member Mmwyl1_0037.